The following is a 252-amino-acid chain: Zinc finger CCCH domain-containing protein 28 (252 aa).

Over residues 1–21 (MSHRRDYGSDAVHVRITHDPP) the composition is skewed to basic and acidic residues. The tract at residues 1-31 (MSHRRDYGSDAVHVRITHDPPPENCFPNSGD) is disordered. 2 consecutive C3H1-type zinc fingers follow at residues 71 to 99 (FFKT…HSAE) and 143 to 171 (NWKT…HGPS).

This Arabidopsis thaliana (Mouse-ear cress) protein is Zinc finger CCCH domain-containing protein 28.